The sequence spans 274 residues: NADPH-dependent 7-cyano-7-deazaguanine reductase (274 aa).

80–82 (VES) contributes to the substrate binding site. NADPH is bound at residue 82–83 (SK). The active-site Thioimide intermediate is cysteine 181. The active-site Proton donor is aspartate 188. A substrate-binding site is contributed by 220 to 221 (HE). 249–250 (RG) contacts NADPH.

This sequence belongs to the GTP cyclohydrolase I family. QueF type 2 subfamily. Homodimer.

It localises to the cytoplasm. It catalyses the reaction 7-aminomethyl-7-carbaguanine + 2 NADP(+) = 7-cyano-7-deazaguanine + 2 NADPH + 3 H(+). It functions in the pathway tRNA modification; tRNA-queuosine biosynthesis. Catalyzes the NADPH-dependent reduction of 7-cyano-7-deazaguanine (preQ0) to 7-aminomethyl-7-deazaguanine (preQ1). The polypeptide is NADPH-dependent 7-cyano-7-deazaguanine reductase (Burkholderia ambifaria (strain ATCC BAA-244 / DSM 16087 / CCUG 44356 / LMG 19182 / AMMD) (Burkholderia cepacia (strain AMMD))).